The following is a 116-amino-acid chain: Putative iron-sulfur cluster insertion protein ErpA (116 aa).

Residues Cys44, Cys108, and Cys110 each contribute to the iron-sulfur cluster site.

The protein belongs to the HesB/IscA family. In terms of assembly, homodimer. Iron-sulfur cluster serves as cofactor.

Functionally, required for insertion of 4Fe-4S clusters. The protein is Putative iron-sulfur cluster insertion protein ErpA of Janthinobacterium sp. (strain Marseille) (Minibacterium massiliensis).